The chain runs to 840 residues: Lon protease homolog 2, peroxisomal (840 aa).

The 210-residue stretch at 13–222 (LPLLCTHDGV…KALPLLTRQI (210 aa)) folds into the Lon N-terminal domain. 375 to 382 (GPPGVGKT) contributes to the ATP binding site. The tract at residues 583 to 606 (QKVSRSEAPTEQHAEQNTDSKVED) is disordered. The segment covering 584–606 (KVSRSEAPTEQHAEQNTDSKVED) has biased composition (basic and acidic residues). The 185-residue stretch at 641-825 (LTLPGVAIGL…DEVLNAAFDG (185 aa)) folds into the Lon proteolytic domain. Residues Ser-731 and Lys-774 contribute to the active site. The short motif at 838–840 (SKL) is the Microbody targeting signal element.

Belongs to the peptidase S16 family.

The protein localises to the peroxisome matrix. The enzyme catalyses Hydrolysis of proteins in presence of ATP.. Functionally, ATP-dependent serine protease that mediates the selective degradation of misfolded and unassembled polypeptides in the peroxisomal matrix. Necessary for type 2 peroxisome targeting signal (PTS2)-containing protein processing and facilitates peroxisome matrix protein import. This Danio rerio (Zebrafish) protein is Lon protease homolog 2, peroxisomal (lonp2).